Reading from the N-terminus, the 562-residue chain is Zinc finger protein 579 (562 aa).

Positions 1 to 11 (MDPQPPPPAQG) are enriched in pro residues. Positions 1–45 (MDPQPPPPAQGSPPHRDRGRGRGRGRGRGRGRGRGRGGAGAPRAP) are disordered. The segment covering 17 to 35 (DRGRGRGRGRGRGRGRGRG) has biased composition (basic residues). 3 consecutive C2H2-type zinc fingers follow at residues 46–68 (LPCP…RLSH), 74–96 (HACP…LRGH), and 102–125 (LRCA…AQEH). An Omega-N-methylarginine modification is found at R94. Disordered regions lie at residues 120-154 (HLAQ…EGVE) and 166-199 (EEAT…AEAG). Positions 187-197 (DPRESEAKEAE) are enriched in basic and acidic residues. The residue at position 191 (S191) is a Phosphoserine. 2 consecutive C2H2-type zinc fingers follow at residues 267 to 289 (HQCS…RLVH) and 295 to 317 (FVCP…RRVH). The segment at 321 to 377 (SLLAPLPGAGKKDDKASGGRNSGKGPEGGEGAECGGASEGGEGGHNGGDATPARPPA) is disordered. Residues 340–367 (RNSGKGPEGGEGAECGGASEGGEGGHNG) show a composition bias toward gly residues. 3 C2H2-type zinc fingers span residues 382–404 (FWCP…GVTH), 410–432 (FQCV…AQVH), and 439–461 (HPCP…QRCH). A Phosphoserine modification is found at S486. Residues 505–530 (AHIKEEPPSPGTPPQSPPAPPVFLSA) are disordered. The segment covering 512 to 525 (PSPGTPPQSPPAPP) has biased composition (pro residues).

Belongs to the krueppel C2H2-type zinc-finger protein family.

The protein localises to the nucleus. In terms of biological role, may be involved in transcriptional regulation. This Mus musculus (Mouse) protein is Zinc finger protein 579 (Znf579).